We begin with the raw amino-acid sequence, 205 residues long: Large ribosomal subunit protein uL3 (205 aa).

The interval 126–150 (GGPKTHGQSDRHRAPGSISSTTTPG) is disordered.

This sequence belongs to the universal ribosomal protein uL3 family. In terms of assembly, part of the 50S ribosomal subunit. Forms a cluster with proteins L14 and L19.

One of the primary rRNA binding proteins, it binds directly near the 3'-end of the 23S rRNA, where it nucleates assembly of the 50S subunit. The chain is Large ribosomal subunit protein uL3 from Dehalococcoides mccartyi (strain ATCC BAA-2266 / KCTC 15142 / 195) (Dehalococcoides ethenogenes (strain 195)).